The chain runs to 534 residues: NEDD8-activating enzyme E1 regulatory subunit (534 aa).

Ala-2 bears the N-acetylalanine mark. N6-acetyllysine occurs at positions 6 and 341. The interaction with UBA3 stretch occupies residues 331 to 344 (DMIADSGKYIKLQN).

This sequence belongs to the ubiquitin-activating E1 family. ULA1 subfamily. As to quaternary structure, heterodimer of UBA3 and NAE1. The complex binds NEDD8 and UBE2M. Binds APP and TP53BP2. Post-translationally, ubiquitinated by TRIP12, leading to its degradation by the proteasome. As to expression, ubiquitous in fetal tissues. Expressed throughout the adult brain.

Its subcellular location is the cell membrane. Its pathway is protein modification; protein neddylation. Binding of TP53BP2 to the regulatory subunit NAE1 decreases neddylation activity. Its function is as follows. Regulatory subunit of the dimeric UBA3-NAE1 E1 enzyme. E1 activates NEDD8 by first adenylating its C-terminal glycine residue with ATP, thereafter linking this residue to the side chain of the catalytic cysteine, yielding a NEDD8-UBA3 thioester and free AMP. E1 finally transfers NEDD8 to the catalytic cysteine of UBE2M. Necessary for cell cycle progression through the S-M checkpoint. Overexpression of NAE1 causes apoptosis through deregulation of NEDD8 conjugation. The covalent attachment of NEDD8 to target proteins is known as 'neddylation' and the process is involved in the regulation of cell growth, viability and development. The sequence is that of NEDD8-activating enzyme E1 regulatory subunit (NAE1) from Homo sapiens (Human).